We begin with the raw amino-acid sequence, 372 residues long: tRNA-specific 2-thiouridylase MnmA (372 aa).

Residues 16-23 and M42 each bind ATP; that span reads GMSGGVDS. Positions 102–104 are interaction with target base in tRNA; it reads NPD. The active-site Nucleophile is the C107. A disulfide bridge connects residues C107 and C205. G132 contacts ATP. The interval 155–157 is interaction with tRNA; it reads KDQ. The active-site Cysteine persulfide intermediate is C205. The segment at 317–318 is interaction with tRNA; sequence RY.

This sequence belongs to the MnmA/TRMU family.

The protein resides in the cytoplasm. The catalysed reaction is S-sulfanyl-L-cysteinyl-[protein] + uridine(34) in tRNA + AH2 + ATP = 2-thiouridine(34) in tRNA + L-cysteinyl-[protein] + A + AMP + diphosphate + H(+). Catalyzes the 2-thiolation of uridine at the wobble position (U34) of tRNA, leading to the formation of s(2)U34. In Shewanella frigidimarina (strain NCIMB 400), this protein is tRNA-specific 2-thiouridylase MnmA.